Consider the following 232-residue polypeptide: LexA repressor (232 aa).

Residues 1-25 (MSDDSSDSTDAPGTSRSRDSGLTER) form a disordered region. Residues 16–25 (RSRDSGLTER) are compositionally biased toward basic and acidic residues. The segment at residues 46-66 (IREIGDAVGLTSTSSVAHQLR) is a DNA-binding region (H-T-H motif). Catalysis depends on for autocatalytic cleavage activity residues Ser-156 and Lys-193.

Belongs to the peptidase S24 family. Homodimer.

The catalysed reaction is Hydrolysis of Ala-|-Gly bond in repressor LexA.. Its function is as follows. Represses a number of genes involved in the response to DNA damage (SOS response), including recA and lexA. In the presence of single-stranded DNA, RecA interacts with LexA causing an autocatalytic cleavage which disrupts the DNA-binding part of LexA, leading to derepression of the SOS regulon and eventually DNA repair. In Mycolicibacterium gilvum (strain PYR-GCK) (Mycobacterium gilvum (strain PYR-GCK)), this protein is LexA repressor.